A 368-amino-acid chain; its full sequence is Flagellar P-ring protein 1 (368 aa).

A signal peptide spans M1–A24.

It belongs to the FlgI family. The basal body constitutes a major portion of the flagellar organelle and consists of four rings (L,P,S, and M) mounted on a central rod.

It localises to the periplasm. The protein resides in the bacterial flagellum basal body. Its function is as follows. Assembles around the rod to form the L-ring and probably protects the motor/basal body from shearing forces during rotation. The polypeptide is Flagellar P-ring protein 1 (Chromobacterium violaceum (strain ATCC 12472 / DSM 30191 / JCM 1249 / CCUG 213 / NBRC 12614 / NCIMB 9131 / NCTC 9757 / MK)).